A 361-amino-acid polypeptide reads, in one-letter code: Holliday junction branch migration complex subunit RuvB (361 aa).

Basic and acidic residues-rich tracts occupy residues 1 to 13 (MSDV…KLPE) and 33 to 43 (QGEHDIERSLR). Residues 1-43 (MSDVERTEFKLPEGMDLSSPPQRNQDVDAAEQQGEHDIERSLR) are disordered. Residues 2–203 (SDVERTEFKL…FGFTAQMEYY (202 aa)) form a large ATPase domain (RuvB-L) region. Residues L42, R43, G84, K87, T88, T89, 150 to 152 (EDF), R193, Y203, and R240 each bind ATP. T88 serves as a coordination point for Mg(2+). Residues 204–274 (DTEDLTRVIS…AAQAALRVFD (71 aa)) are small ATPAse domain (RuvB-S). A head domain (RuvB-H) region spans residues 277–361 (ERGLDRLDRA…PEGAIGGTLF (85 aa)). Residues R332 and R337 each contribute to the DNA site.

The protein belongs to the RuvB family. As to quaternary structure, homohexamer. Forms an RuvA(8)-RuvB(12)-Holliday junction (HJ) complex. HJ DNA is sandwiched between 2 RuvA tetramers; dsDNA enters through RuvA and exits via RuvB. An RuvB hexamer assembles on each DNA strand where it exits the tetramer. Each RuvB hexamer is contacted by two RuvA subunits (via domain III) on 2 adjacent RuvB subunits; this complex drives branch migration. In the full resolvosome a probable DNA-RuvA(4)-RuvB(12)-RuvC(2) complex forms which resolves the HJ.

The protein localises to the cytoplasm. It carries out the reaction ATP + H2O = ADP + phosphate + H(+). The RuvA-RuvB-RuvC complex processes Holliday junction (HJ) DNA during genetic recombination and DNA repair, while the RuvA-RuvB complex plays an important role in the rescue of blocked DNA replication forks via replication fork reversal (RFR). RuvA specifically binds to HJ cruciform DNA, conferring on it an open structure. The RuvB hexamer acts as an ATP-dependent pump, pulling dsDNA into and through the RuvAB complex. RuvB forms 2 homohexamers on either side of HJ DNA bound by 1 or 2 RuvA tetramers; 4 subunits per hexamer contact DNA at a time. Coordinated motions by a converter formed by DNA-disengaged RuvB subunits stimulates ATP hydrolysis and nucleotide exchange. Immobilization of the converter enables RuvB to convert the ATP-contained energy into a lever motion, pulling 2 nucleotides of DNA out of the RuvA tetramer per ATP hydrolyzed, thus driving DNA branch migration. The RuvB motors rotate together with the DNA substrate, which together with the progressing nucleotide cycle form the mechanistic basis for DNA recombination by continuous HJ branch migration. Branch migration allows RuvC to scan DNA until it finds its consensus sequence, where it cleaves and resolves cruciform DNA. This is Holliday junction branch migration complex subunit RuvB from Corynebacterium aurimucosum (strain ATCC 700975 / DSM 44827 / CIP 107346 / CN-1) (Corynebacterium nigricans).